The sequence spans 525 residues: Cytochrome P450 4V2 (525 aa).

A helical transmembrane segment spans residues 14–34 (LLWGAASAVSLAGATILISIF). Residues Glu329 and Cys467 each contribute to the heme site.

It belongs to the cytochrome P450 family. The cofactor is heme.

The protein localises to the endoplasmic reticulum membrane. It catalyses the reaction dodecanoate + reduced [NADPH--hemoprotein reductase] + O2 = 12-hydroxydodecanoate + oxidized [NADPH--hemoprotein reductase] + H2O + H(+). It carries out the reaction tetradecanoate + reduced [NADPH--hemoprotein reductase] + O2 = 14-hydroxytetradecanoate + oxidized [NADPH--hemoprotein reductase] + H2O + H(+). The catalysed reaction is hexadecanoate + reduced [NADPH--hemoprotein reductase] + O2 = 16-hydroxyhexadecanoate + oxidized [NADPH--hemoprotein reductase] + H2O + H(+). The enzyme catalyses (5Z,8Z,11Z,14Z,17Z)-eicosapentaenoate + reduced [NADPH--hemoprotein reductase] + O2 = 20-hydroxy-(5Z,8Z,11Z,14Z,17Z)-eicosapentaenoate + oxidized [NADPH--hemoprotein reductase] + H2O + H(+). It catalyses the reaction (4Z,7Z,10Z,13Z,16Z,19Z)-docosahexaenoate + reduced [NADPH--hemoprotein reductase] + O2 = 22-hydroxy-(4Z,7Z,10Z,13Z,16Z,19Z)-docosahexaenoate + oxidized [NADPH--hemoprotein reductase] + H2O + H(+). The protein operates within lipid metabolism; fatty acid metabolism. Inhibited by N-hydroxy-N'-(4-n-butyl-2-methylphenyl formamidine)(HET0016) with an IC(50) of 38 nM. Its function is as follows. A cytochrome P450 monooxygenase involved in fatty acid metabolism in the eye. Catalyzes the omega-hydroxylation of polyunsaturated fatty acids (PUFAs) docosahexaenoate (DHA) and its precursor eicosapentaenoate (EPA), and may contribute to the homeostasis of these retinal PUFAs. Omega hydroxylates saturated fatty acids such as laurate, myristate and palmitate, the catalytic efficiency decreasing in the following order: myristate &gt; laurate &gt; palmitate (C14&gt;C12&gt;C16). Mechanistically, uses molecular oxygen inserting one oxygen atom into a substrate, and reducing the second into a water molecule, with two electrons provided by NADPH via cytochrome P450 reductase (CPR; NADPH-ferrihemoprotein reductase). In Mus musculus (Mouse), this protein is Cytochrome P450 4V2 (Cyp4v2).